The following is a 421-amino-acid chain: Probable pectate lyase C (421 aa).

The N-terminal stretch at Met1 to Ala19 is a signal peptide. N-linked (GlcNAc...) asparagine glycans are attached at residues Asn164 and Asn201. Arg204 is an active-site residue. The region spanning Asn257–Met292 is the EF-hand domain. Residues Asp270, Asp272, Asp274, Thr276, and Glu281 each contribute to the Ca(2+) site. The tract at residues Asp353–Asp376 is disordered. Acidic residues predominate over residues Thr367–Asp376.

This sequence belongs to the polysaccharide lyase 1 family. Ca(2+) serves as cofactor.

The protein resides in the secreted. It carries out the reaction Eliminative cleavage of (1-&gt;4)-alpha-D-galacturonan to give oligosaccharides with 4-deoxy-alpha-D-galact-4-enuronosyl groups at their non-reducing ends.. Pectinolytic enzyme consist of four classes of enzymes: pectin lyase, polygalacturonase, pectin methylesterase and rhamnogalacturonase. Among pectinolytic enzymes, pectin lyase is the most important in depolymerization of pectin, since it cleaves internal glycosidic bonds of highly methylated pectins. Favors pectate, the anion, over pectin, the methyl ester. This Emericella nidulans (strain FGSC A4 / ATCC 38163 / CBS 112.46 / NRRL 194 / M139) (Aspergillus nidulans) protein is Probable pectate lyase C (plyC).